Reading from the N-terminus, the 245-residue chain is NAD-dependent protein deacylase (245 aa).

The Deacetylase sirtuin-type domain maps to 1 to 245 (MEAVWESARI…RLSRAMGIDI (245 aa)). Residue 22–41 (GAGISAESGIPTFRGKDGLW) coordinates NAD(+). Substrate is bound by residues Tyr-66 and Arg-69. Residue 100–103 (QNVD) coordinates NAD(+). His-118 (proton acceptor) is an active-site residue. Residues Cys-126, Cys-129, Cys-146, and Cys-149 each coordinate Zn(2+). NAD(+) is bound by residues 186–188 (GTS), 212–214 (NPE), and Met-241.

This sequence belongs to the sirtuin family. Class III subfamily. Zn(2+) serves as cofactor.

It localises to the cytoplasm. The enzyme catalyses N(6)-acetyl-L-lysyl-[protein] + NAD(+) + H2O = 2''-O-acetyl-ADP-D-ribose + nicotinamide + L-lysyl-[protein]. The catalysed reaction is N(6)-succinyl-L-lysyl-[protein] + NAD(+) + H2O = 2''-O-succinyl-ADP-D-ribose + nicotinamide + L-lysyl-[protein]. Functionally, NAD-dependent lysine deacetylase and desuccinylase that specifically removes acetyl and succinyl groups on target proteins. Modulates the activities of several proteins which are inactive in their acylated form. Deacetylates the N-terminal lysine residue of Alba, the major archaeal chromatin protein and that, in turn, increases Alba's DNA binding affinity, thereby repressing transcription. This is NAD-dependent protein deacylase from Aeropyrum pernix (strain ATCC 700893 / DSM 11879 / JCM 9820 / NBRC 100138 / K1).